Consider the following 4540-residue polypeptide: Dynein heavy chain, cytoplasmic (4540 aa).

Residues 1 to 1796 form a stem region; it reads MEESETQLNV…LIQMGNAQFH (1796 aa). 6 coiled-coil regions span residues 440 to 482, 698 to 722, 794 to 827, 975 to 995, 1169 to 1251, and 1295 to 1311; these read EHIK…NVQQ, RVNYEKKLSQLFKEVRNLSNMKTKV, VKKFTDKVFELEQAVNGLNERIGQIESLCEAMKT, QQLIKDAYSQIGQLLEDMEQY, RSKK…LKMD, and QNKKIKDTCDEAQKQLN. AAA stretches follow at residues 1797 to 2018, 2091 to 2348, 2457 to 2705, and 2796 to 3056; these read YGFE…VLNS, KELA…FTRI, EIDP…WKYA, and QFNE…AKRF. Residues 1835-1842, 2129-2136, 2496-2503, and 2834-2841 contribute to the ATP site; these read GPAGTGKT, GPCGCGKS, GPPGSGKT, and GSSGVGKT. Coiled-coil stretches lie at residues 3076-3182, 3289-3367, 3653-3688, and 3820-3851; these read NEKK…NAKQ, QLKY…RSQA, EDEKVIQTLEKLKKEAAVIVQEMKQADTIMNEVMNT, and QQLKQLEGITQQNQTFNRLIDNLNKNEDRWLN. The interval 3076-3367 is stalk; sequence NEKKSQLEDQ…VQEKVTRSQA (292 aa). The disordered stretch occupies residues 3140-3159; the sequence is KKKEDSTRLSSDAEKKAKEM. Residues 3444 to 3673 are AAA 5; the sequence is LSRPSDRLNW…LKKEAAVIVQ (230 aa). An AAA 6 region spans residues 3908 to 4123; sequence ARKLINQILG…QRCSLDLIDE (216 aa). Coiled-coil stretches lie at residues 4238–4259 and 4313–4342; these read QKLITKVQNLQQEGEEEITQIE and RFLDREITVASKLLKAVRQNIEELIQLAQG.

This sequence belongs to the dynein heavy chain family. Consists of at least two heavy chains and a number of intermediate and light chains.

The protein resides in the cytoplasm. Its subcellular location is the cytoskeleton. Cytoplasmic dynein acts as a motor for the intracellular retrograde motility of vesicles and organelles along microtubules. Dynein has ATPase activity; the force-producing power stroke is thought to occur on release of ADP. The polypeptide is Dynein heavy chain, cytoplasmic (DHC-8) (Paramecium tetraurelia).